The sequence spans 382 residues: Intermediate transcription factor 3 large subunit (382 aa).

This sequence belongs to the poxviruses A23 family. Heterodimer of a 45 kDa and a 32 kDa subunit.

In terms of biological role, acts with RNA polymerase to initiate transcription from intermediate gene promoters. In Monkeypox virus (strain Zaire-96-I-16) (MPX), this protein is Intermediate transcription factor 3 large subunit (VITF3L).